The chain runs to 217 residues: Probable GTP-binding protein EngB (217 aa).

The EngB-type G domain maps to 29 to 213 (GPSEVAFAGR…RQAIAQTVGI (185 aa)). GTP is bound by residues 37-44 (GRSNVGKS), 64-68 (GRTQE), 91-94 (DMPG), 158-161 (TKTD), and 192-194 (TSS). Mg(2+) contacts are provided by Ser44 and Thr66.

The protein belongs to the TRAFAC class TrmE-Era-EngA-EngB-Septin-like GTPase superfamily. EngB GTPase family. Requires Mg(2+) as cofactor.

Functionally, necessary for normal cell division and for the maintenance of normal septation. This is Probable GTP-binding protein EngB from Rhizobium etli (strain CIAT 652).